Reading from the N-terminus, the 309-residue chain is Porphobilinogen deaminase (309 aa).

Residue Cys241 is modified to S-(dipyrrolylmethanemethyl)cysteine.

Belongs to the HMBS family. Monomer. Dipyrromethane is required as a cofactor.

It carries out the reaction 4 porphobilinogen + H2O = hydroxymethylbilane + 4 NH4(+). Its pathway is porphyrin-containing compound metabolism; protoporphyrin-IX biosynthesis; coproporphyrinogen-III from 5-aminolevulinate: step 2/4. Tetrapolymerization of the monopyrrole PBG into the hydroxymethylbilane pre-uroporphyrinogen in several discrete steps. The polypeptide is Porphobilinogen deaminase (Campylobacter concisus (strain 13826)).